The chain runs to 244 residues: Claudin-12 (244 aa).

Residues 1 to 10 (MGCRDVHAAT) lie on the Cytoplasmic side of the membrane. Residues 11 to 31 (VLSFLCGIASVAGLFAGTLLP) traverse the membrane as a helical segment. Topologically, residues 32-87 (NWRKLRLITFNRNEKNLTIYTGLWVKCARYDGSSDCLMYDRTWYLSVDQLDLRVLQ) are extracellular. A helical transmembrane segment spans residues 88–108 (FALPLSIVIAMGALLLCLIGM). Topologically, residues 109–135 (CNTAFNSSVPNIKLAKCLVNSAGCHLV) are cytoplasmic. The chain crosses the membrane as a helical span at residues 136–156 (AGLLFFLAGTVSLSPSIWAIF). The Extracellular segment spans residues 157 to 174 (YNSHLNRKFEPVFTFDYA). Residues 175-195 (VFVTIASSGGLFMTALLLFVW) traverse the membrane as a helical segment. Residues 196–244 (YCACKSLSSPFWQPLYSHAPGMHTYSQPYSSRSRLSAIEIDIPVVSHST) lie on the Cytoplasmic side of the membrane. A phosphoserine mark is found at Ser228 and Ser231.

It belongs to the claudin family. Interacts with OCLN.

It is found in the cell junction. The protein localises to the tight junction. It localises to the cell membrane. Functionally, plays a major role in tight junction-specific obliteration of the intercellular space, through calcium-independent cell-adhesion activity. The polypeptide is Claudin-12 (Cldn12) (Mus musculus (Mouse)).